Reading from the N-terminus, the 159-residue chain is MADS-box transcription factor 23 (159 aa).

Residues 1 to 61 (MGRGKIEIKR…SRLYDFASSS (61 aa)) enclose the MADS-box domain. Positions 86–159 (AKLWQQEAAS…QELSRKVVTT (74 aa)) constitute a K-box domain.

Expressed in seedling roots and developing seeds.

It localises to the nucleus. Its function is as follows. Probable transcription factor. In Oryza sativa subsp. japonica (Rice), this protein is MADS-box transcription factor 23 (MADS23).